A 243-amino-acid polypeptide reads, in one-letter code: tRNA (guanine-N(1)-)-methyltransferase (243 aa).

Residues G113 and 133–138 contribute to the S-adenosyl-L-methionine site; that span reads IGDFVL.

The protein belongs to the RNA methyltransferase TrmD family. Homodimer.

It is found in the cytoplasm. The catalysed reaction is guanosine(37) in tRNA + S-adenosyl-L-methionine = N(1)-methylguanosine(37) in tRNA + S-adenosyl-L-homocysteine + H(+). In terms of biological role, specifically methylates guanosine-37 in various tRNAs. This is tRNA (guanine-N(1)-)-methyltransferase from Bacillus licheniformis (strain ATCC 14580 / DSM 13 / JCM 2505 / CCUG 7422 / NBRC 12200 / NCIMB 9375 / NCTC 10341 / NRRL NRS-1264 / Gibson 46).